A 474-amino-acid polypeptide reads, in one-letter code: Trigger factor (474 aa).

The region spanning 165–250 (GDRVTIDYLG…VKTVSKPDEL (86 aa)) is the PPIase FKBP-type domain. The span at 451-467 (VKKKTASDNKKSNEIKK) shows a compositional bias: basic and acidic residues. Residues 451–474 (VKKKTASDNKKSNEIKKKSTMKKV) form a disordered region.

It belongs to the FKBP-type PPIase family. Tig subfamily.

It localises to the cytoplasm. The enzyme catalyses [protein]-peptidylproline (omega=180) = [protein]-peptidylproline (omega=0). Involved in protein export. Acts as a chaperone by maintaining the newly synthesized protein in an open conformation. Functions as a peptidyl-prolyl cis-trans isomerase. In Bartonella bacilliformis (strain ATCC 35685 / KC583 / Herrer 020/F12,63), this protein is Trigger factor.